A 101-amino-acid chain; its full sequence is Large ribosomal subunit protein eL43 (101 aa).

Residues Cys40, Cys43, Cys59, and Cys62 each coordinate Zn(2+). A C4-type zinc finger spans residues 40-62 (CPSCRSLVRLERIAFGIWRCPKC).

Belongs to the eukaryotic ribosomal protein eL43 family. Putative zinc-binding subfamily. As to quaternary structure, part of the 50S ribosomal subunit. Zn(2+) serves as cofactor.

Functionally, binds to the 23S rRNA. The chain is Large ribosomal subunit protein eL43 from Pyrobaculum aerophilum (strain ATCC 51768 / DSM 7523 / JCM 9630 / CIP 104966 / NBRC 100827 / IM2).